The primary structure comprises 118 residues: UPF0342 protein BPUM_0928 (118 aa).

This sequence belongs to the UPF0342 family.

In Bacillus pumilus (strain SAFR-032), this protein is UPF0342 protein BPUM_0928.